The following is an 804-amino-acid chain: MDDELLELQRQFEFAQQVKSSVRLSDRNVVELVQKLQELGVIDFDLLHTVTGKEYITQEQLRNEITREISKLGRVSVIDLADTIGVDLYHVEKQAQDVVLNDPGLMLVQGEIISQSYWDSIAEEINERLQECSQIAVAELAGQLQVGSELVQSVLEPRLGTLVKARLEGGQLYTPAYVERVTAMVRGASRGIFVPSNLSALWAPLQQLVQETNGASGVAVENSFFQSIFNRLLKEEEMLGSLRAGTHWTPSAFATAQKECVDSSFSQNSYISYESMQKLGISQAVQFLQSRYPDGTPLAAVFIHSSMIEMLDSATEDAIEQNSWIDSLSVLPSSFTSQDANKMLLLCPSVQSALKAEKALILGESYVLSSGFIKGIYDQIEKEADAFSIQASTATLIHPSSKSSESTESIPANTDKGSKKKKGKSASTKAATVETVPDDEEDARPKSKRNQKKGRDSSSSQKLDSKAGGKKESVKAQESNNIIPPDEWVMKKIVDSVPEFEDDGTENPDSILKHLADHMKPMLINSLKERRKKIFTENADRMRRLIDDLQKKLDESFLNMQLYEKALDLFEDDQSTAVVLHRHLLRTTAATIADTLLHGLDIHNKMKNGTEVEESKTQDLVLLDSSERTALAKNLNGSLSKKALALVEALEGKRVDTFMVTFRDLAEESGLVLKKLDKKLERTLLHSYRKDLISQVSTESDPIALLAKVVSLLFIKIHNKALQAPGRAIAAAISHLKEKLDESAYKTLTDYQTATVTLLALMSASSGEEHDCSADRILTKRELLESQMPLLRTLVLGDSQPQQS.

Position 1 is an N-acetylmethionine (Met1). Residues 397 to 483 (IHPSSKSSES…VKAQESNNII (87 aa)) are disordered. The segment covering 400 to 409 (SSKSSESTES) has biased composition (low complexity). The span at 463–475 (LDSKAGGKKESVK) shows a compositional bias: basic and acidic residues.

It belongs to the UFL1 family.

Its function is as follows. E3 UFM1-protein ligase that mediates ufmylation of target proteins. The chain is E3 UFM1-protein ligase 1 homolog from Arabidopsis thaliana (Mouse-ear cress).